The chain runs to 557 residues: Putative sensory transducer protein (557 aa).

The helical transmembrane segment at 122–145 (TASTVMIVVIFVGILIAIALGVFI) threads the bilayer. The 53-residue stretch at 147-199 (RIISKPIGQMVEAADRLALGDVEVDVKAETRDEIGKLAESFKRMIENIREQAY) folds into the HAMP domain. Residues 243–472 (VAAQVAAGAK…ESAAASEELS (230 aa)) enclose the Methyl-accepting transducer domain. Position 268 is a glutamate methyl ester (Gln) (glutamine 268). Glutamate 274 carries the glutamate methyl ester (Glu) modification. Residue glutamine 281 is modified to Glutamate methyl ester (Gln). Glutamate methyl ester (Glu) is present on glutamate 463. Residues 511 to 541 (DYTENKQPKSYSKEENGEYSDGKETAEKDVG) are compositionally biased toward basic and acidic residues. Residues 511–542 (DYTENKQPKSYSKEENGEYSDGKETAEKDVGG) are disordered.

The protein belongs to the methyl-accepting chemotaxis (MCP) protein family.

It localises to the cell membrane. In terms of biological role, may bind attractants or detect changes in the extracellular concentration of soluble sugars. The sequence is that of Putative sensory transducer protein from Acetivibrio thermocellus (strain ATCC 27405 / DSM 1237 / JCM 9322 / NBRC 103400 / NCIMB 10682 / NRRL B-4536 / VPI 7372) (Clostridium thermocellum).